The sequence spans 467 residues: Glutamate--tRNA ligase (467 aa).

A 'HIGH' region motif is present at residues 9–19 (PSPTGFLHIGG). The 'KMSKS' region motif lies at 250–254 (KLSKR). Lysine 253 serves as a coordination point for ATP.

This sequence belongs to the class-I aminoacyl-tRNA synthetase family. Glutamate--tRNA ligase type 1 subfamily. Monomer.

It localises to the cytoplasm. The enzyme catalyses tRNA(Glu) + L-glutamate + ATP = L-glutamyl-tRNA(Glu) + AMP + diphosphate. Its function is as follows. Catalyzes the attachment of glutamate to tRNA(Glu) in a two-step reaction: glutamate is first activated by ATP to form Glu-AMP and then transferred to the acceptor end of tRNA(Glu). This is Glutamate--tRNA ligase from Mesomycoplasma hyopneumoniae (strain 232) (Mycoplasma hyopneumoniae).